Consider the following 145-residue polypeptide: Aminoglycoside N(6')-acetyltransferase type 1 (145 aa).

The N-acetyltransferase domain occupies 1 to 145 (MDIRQMNRTH…ERVIFYRKRC (145 aa)). Residues tryptophan 22, histidine 25, tyrosine 66, and glutamate 79 each contribute to the substrate site. Acetyl-CoA is bound by residues 81–83 (IFV) and 89–94 (QRGVAK). Position 115 (aspartate 115) interacts with substrate. Asparagine 120 contributes to the acetyl-CoA binding site. Glutamate 136 serves as a coordination point for substrate.

In terms of assembly, homodimer.

The catalysed reaction is kanamycin B + acetyl-CoA = N(6')-acetylkanamycin B + CoA + H(+). Catalyzes the transfer of an acetyl group from acetyl-CoA to the 6'-amino group of aminoglycoside molecules conferring resistance to antibiotics containing the purpurosamine ring. The protein is Aminoglycoside N(6')-acetyltransferase type 1 of Salmonella typhimurium (strain LT2 / SGSC1412 / ATCC 700720).